We begin with the raw amino-acid sequence, 335 residues long: Transcription factor bHLH63 (335 aa).

Residues 110 to 160 (MTMNRDDLVEEGEEEKSKITEQNNGSTKSIKKMKHKAKKEENNFSNDSSKV) are disordered. One can recognise a bHLH domain in the interval 178–228 (QATDSHSIAERVRREKISERMKFLQDLVPGCDKITGKAGMLDEIINYVQSL).

As to quaternary structure, homodimer. Interacts with IBH1. Binds reversibly to CRY2 after blue light illumination. Expressed constitutively in roots, leaves, and stems.

It localises to the nucleus. In terms of biological role, transcription factor that binds DNA to G box 5'-CACGTG-3' and, to a lower extent, to E-box 5'-CANNTG-3' in vitro. Binds to chromatin DNA of the FT gene and promotes its expression, and thus triggers flowering in response to blue light. This Arabidopsis thaliana (Mouse-ear cress) protein is Transcription factor bHLH63 (BHLH63).